Consider the following 236-residue polypeptide: Demethylmenaquinone methyltransferase (236 aa).

S-adenosyl-L-methionine is bound by residues Thr-58, Asp-79, and 106–107 (NA).

This sequence belongs to the class I-like SAM-binding methyltransferase superfamily. MenG/UbiE family.

The enzyme catalyses a 2-demethylmenaquinol + S-adenosyl-L-methionine = a menaquinol + S-adenosyl-L-homocysteine + H(+). Its pathway is quinol/quinone metabolism; menaquinone biosynthesis; menaquinol from 1,4-dihydroxy-2-naphthoate: step 2/2. Its function is as follows. Methyltransferase required for the conversion of demethylmenaquinol (DMKH2) to menaquinol (MKH2). In Alkalihalophilus pseudofirmus (strain ATCC BAA-2126 / JCM 17055 / OF4) (Bacillus pseudofirmus), this protein is Demethylmenaquinone methyltransferase.